We begin with the raw amino-acid sequence, 262 residues long: Small ribosomal subunit protein eS4 (262 aa).

Positions 42 to 104 constitute an S4 RNA-binding domain; that stretch reads LPLLIFLRNR…TGEFFRLIYD (63 aa).

The protein belongs to the eukaryotic ribosomal protein eS4 family.

The chain is Small ribosomal subunit protein eS4 (RpS4) from Lysiphlebus testaceipes (Greenbugs aphid parastoid).